A 279-amino-acid chain; its full sequence is Energy-coupling factor transporter ATP-binding protein EcfA1 (279 aa).

Residues 6–240 form the ABC transporter domain; sequence VRLEHVFYKY…ADAMREIGLG (235 aa). Residue 40–47 participates in ATP binding; it reads GHNGSGKS.

The protein belongs to the ABC transporter superfamily. Energy-coupling factor EcfA family. In terms of assembly, forms a stable energy-coupling factor (ECF) transporter complex composed of 2 membrane-embedded substrate-binding proteins (S component), 2 ATP-binding proteins (A component) and 2 transmembrane proteins (T component).

Its subcellular location is the cell membrane. Its function is as follows. ATP-binding (A) component of a common energy-coupling factor (ECF) ABC-transporter complex. Unlike classic ABC transporters this ECF transporter provides the energy necessary to transport a number of different substrates. The protein is Energy-coupling factor transporter ATP-binding protein EcfA1 of Listeria monocytogenes serovar 1/2a (strain ATCC BAA-679 / EGD-e).